Reading from the N-terminus, the 58-residue chain is Ribulose bisphosphate carboxylase large chain (58 aa).

Positions 1–2 (MS) are excised as a propeptide. N-acetylproline is present on proline 3. N6,N6,N6-trimethyllysine is present on lysine 14.

Belongs to the RuBisCO large chain family. Type I subfamily. Heterohexadecamer of 8 large chains and 8 small chains.

It is found in the plastid. It localises to the chloroplast. It carries out the reaction 2 (2R)-3-phosphoglycerate + 2 H(+) = D-ribulose 1,5-bisphosphate + CO2 + H2O. It catalyses the reaction D-ribulose 1,5-bisphosphate + O2 = 2-phosphoglycolate + (2R)-3-phosphoglycerate + 2 H(+). Its function is as follows. RuBisCO catalyzes two reactions: the carboxylation of D-ribulose 1,5-bisphosphate, the primary event in carbon dioxide fixation, as well as the oxidative fragmentation of the pentose substrate in the photorespiration process. Both reactions occur simultaneously and in competition at the same active site. In Euphorbia characias (Albanian spurge), this protein is Ribulose bisphosphate carboxylase large chain (rbcL).